We begin with the raw amino-acid sequence, 394 residues long: 8-amino-7-oxononanoate synthase (394 aa).

Arginine 21 contributes to the substrate binding site. 112 to 113 (GY) is a binding site for pyridoxal 5'-phosphate. Residue histidine 137 participates in substrate binding. Pyridoxal 5'-phosphate-binding residues include serine 183, histidine 211, and threonine 239. The residue at position 242 (lysine 242) is an N6-(pyridoxal phosphate)lysine. Residue threonine 358 coordinates substrate.

Belongs to the class-II pyridoxal-phosphate-dependent aminotransferase family. BioF subfamily. In terms of assembly, homodimer. Requires pyridoxal 5'-phosphate as cofactor.

The enzyme catalyses 6-carboxyhexanoyl-[ACP] + L-alanine + H(+) = (8S)-8-amino-7-oxononanoate + holo-[ACP] + CO2. Its pathway is cofactor biosynthesis; biotin biosynthesis. Its function is as follows. Catalyzes the decarboxylative condensation of pimeloyl-[acyl-carrier protein] and L-alanine to produce 8-amino-7-oxononanoate (AON), [acyl-carrier protein], and carbon dioxide. The protein is 8-amino-7-oxononanoate synthase of Burkholderia thailandensis (strain ATCC 700388 / DSM 13276 / CCUG 48851 / CIP 106301 / E264).